Here is a 393-residue protein sequence, read N- to C-terminus: MMGGKSSKSKKNVEFGSPSTPVQIKINSEYTEHLSSYERACSEDPKLESFDSALHERTNRVINKLASGVEIKSLSFDSLREVTQCLLDMNQDVVKVILQDKEDIWNNQDLFSLVNLYFESTAKTMDFCSELENCLNRARRSQVIIQFAVNQFEEENEDKENRKYEKTLEELKRFKVAGEPFTKEFFALFDLVYKQQVMMLEELHKLKRKLDKRLRNIKTWRRVSNMVFVTAFVSVLIFSVVAAAVAAPPVVAAIAGALAVPVGSVGKWCNTLWTKYEKVVRGQKEIITSIRIGTYISVKEMDNISILVRKVEVEIESLLKKAEFAITEEKEVRLAIDEIKKKLDVFTETIEELGEHAGKYCSDVTKARTVILQRIIRYPAGSPKDEAPWTEMM.

The tract at residues M1–T20 is disordered. The stretch at V149–R222 forms a coiled coil. The next 2 membrane-spanning stretches (helical) occupy residues M226–A246 and P249–C269. Positions K299–H356 form a coiled coil.

The protein belongs to the UPF0496 family.

The protein resides in the membrane. In Arabidopsis thaliana (Mouse-ear cress), this protein is UPF0496 protein At2g18630.